The sequence spans 433 residues: F-box/kelch-repeat protein At1g24800 (433 aa).

Residues 23–71 enclose the F-box domain; sequence TSMCDLPPKLVGEKILTRIPITSLRAVRSTCKLWNALTKDRVLGKAAAQ. Kelch repeat units lie at residues 170–216 and 286–337; these read HKIL…LYGV and VLYH…RFDN.

The polypeptide is F-box/kelch-repeat protein At1g24800 (Arabidopsis thaliana (Mouse-ear cress)).